The primary structure comprises 163 residues: NAD(P)H-quinone oxidoreductase subunit I, chloroplastic (163 aa).

4Fe-4S ferredoxin-type domains are found at residues 55–84 and 95–124; these read GRIHFEFDKCIACEVCVRVCPIDLPVVDWK and LNYSIDFGICIFCGNCIEYCPTNCLSMTEE. The [4Fe-4S] cluster site is built by Cys64, Cys67, Cys70, Cys74, Cys104, Cys107, Cys110, and Cys114.

Belongs to the complex I 23 kDa subunit family. As to quaternary structure, NDH is composed of at least 16 different subunits, 5 of which are encoded in the nucleus. [4Fe-4S] cluster is required as a cofactor.

It localises to the plastid. The protein resides in the chloroplast thylakoid membrane. It carries out the reaction a plastoquinone + NADH + (n+1) H(+)(in) = a plastoquinol + NAD(+) + n H(+)(out). The enzyme catalyses a plastoquinone + NADPH + (n+1) H(+)(in) = a plastoquinol + NADP(+) + n H(+)(out). NDH shuttles electrons from NAD(P)H:plastoquinone, via FMN and iron-sulfur (Fe-S) centers, to quinones in the photosynthetic chain and possibly in a chloroplast respiratory chain. The immediate electron acceptor for the enzyme in this species is believed to be plastoquinone. Couples the redox reaction to proton translocation, and thus conserves the redox energy in a proton gradient. The chain is NAD(P)H-quinone oxidoreductase subunit I, chloroplastic from Glycine max (Soybean).